The chain runs to 738 residues: Melanotransferrin (738 aa).

The first 19 residues, 1 to 19 (MRLLSVTFWLLLSLRTVVC), serve as a signal peptide directing secretion. Transferrin-like domains lie at 23 to 357 (VQWC…GLLC) and 366 to 706 (LRWC…GMLS). Disulfide bonds link cysteine 26/cysteine 63 and cysteine 36/cysteine 54. The Fe(3+) site is built by aspartate 78 and tyrosine 107. Residue asparagine 118 is glycosylated (N-linked (GlcNAc...) asparagine). Disulfide bonds link cysteine 130–cysteine 216, cysteine 172–cysteine 189, cysteine 186–cysteine 199, and cysteine 257–cysteine 271. Threonine 132 lines the hydrogencarbonate pocket. An N-linked (GlcNAc...) asparagine glycan is attached at asparagine 135. Hydrogencarbonate-binding residues include arginine 136, valine 138, and glycine 139. Tyrosine 210 contacts Fe(3+). Fe(3+) is bound by residues histidine 279 and tyrosine 451. Position 462 is a phosphoserine (serine 462). An N-linked (GlcNAc...) asparagine glycan is attached at asparagine 515. The Fe(3+) site is built by tyrosine 556 and histidine 625. Cysteine 709 carries GPI-anchor amidated cysteine lipidation. A propeptide spans 710–738 (SGAGAAVQRVPLLALLLLTLAAGLLPRVL) (removed in mature form).

It belongs to the transferrin family.

The protein resides in the cell membrane. Functionally, involved in iron cellular uptake. Seems to be internalized and then recycled back to the cell membrane. Binds a single atom of iron per subunit. Could also bind zinc. This Mus musculus (Mouse) protein is Melanotransferrin (Meltf).